The sequence spans 638 residues: Growth hormone receptor (638 aa).

The N-terminal stretch at 1-18 is a signal peptide; sequence MDLWQLLLTLALAGSSDA. The Extracellular portion of the chain corresponds to 19–264; that stretch reads FSGSEPTAAI…NQFTCEEDFY (246 aa). N-linked (GlcNAc...) asparagine glycosylation is present at Asn-46. 2 disulfide bridges follow: Cys-56-Cys-66 and Cys-101-Cys-112. The N-linked (GlcNAc...) asparagine glycan is linked to Asn-115. Cysteines 126 and 140 form a disulfide. The 104-residue stretch at 151 to 254 folds into the Fibronectin type-III domain; sequence PPIALNWTLL…EVLYVTLPQM (104 aa). Residues Asn-156, Asn-161, and Asn-200 are each glycosylated (N-linked (GlcNAc...) asparagine). The short motif at 240–244 is the WSXWS motif element; sequence YGEFS. Residues 265-288 traverse the membrane as a helical segment; sequence FPWLLIIIFGIFGLTVMLFVFLFS. The Cytoplasmic portion of the chain corresponds to 289-638; sequence KQQRIKMLIL…STDQLNKIMP (350 aa). Residues 294-379 form a required for JAK2 binding region; that stretch reads KMLILPPVPV…HQKSHSNLGV (86 aa). The short motif at 297-305 is the Box 1 motif element; that stretch reads ILPPVPVPK. Residues 340-349 carry the UbE motif motif; that stretch reads DSWVEFIELD. Ser-341 carries the phosphoserine modification. The interval 353–388 is disordered; it reads PDEKNEGSDTDRLLSSDHQKSHSNLGVKDGDSGRTS. A compositionally biased stretch (basic and acidic residues) spans 356–372; the sequence is KNEGSDTDRLLSSDHQK. Phosphotyrosine is present on residues Tyr-487 and Tyr-595.

This sequence belongs to the type I cytokine receptor family. Type 1 subfamily. As to quaternary structure, on growth hormone (GH) binding, forms homodimers and binds JAK2 via a box 1-containing domain. The soluble form (GHBP) is produced by phorbol ester-promoted proteolytic cleavage at the cell surface (shedding) by ADAM17/TACE. Shedding is inhibited by growth hormone (GH) binding to the receptor probably due to a conformational change in GHR rendering the receptor inaccessible to ADAM17. Post-translationally, on GH binding, phosphorylated on tyrosine residues in the cytoplasmic domain by JAK2. In terms of processing, ubiquitinated by the ECS(SOCS2) complex following ligand-binding and phosphorylation by JAK2, leading to its degradation by the proteasome. Regulation by the ECS(SOCS2) complex acts as a negative feedback loop of growth hormone receptor signaling. Ubiquitination is not sufficient for GHR internalization.

It localises to the cell membrane. The protein resides in the secreted. Its function is as follows. Receptor for pituitary gland growth hormone (GH1) involved in regulating postnatal body growth. On ligand binding, couples to the JAK2/STAT5 pathway. Functionally, the soluble form (GHBP) acts as a reservoir of growth hormone in plasma and may be a modulator/inhibitor of GH signaling. The chain is Growth hormone receptor (GHR) from Macaca mulatta (Rhesus macaque).